The sequence spans 631 residues: tRNA uridine 5-carboxymethylaminomethyl modification enzyme MnmG (631 aa).

FAD-binding positions include 15-20 (GGGHAG), V127, and S182. Residue 275–289 (GPRYCPSIEDKIVRF) participates in NAD(+) binding. FAD is bound at residue Q372.

It belongs to the MnmG family. As to quaternary structure, homodimer. Heterotetramer of two MnmE and two MnmG subunits. FAD is required as a cofactor.

It is found in the cytoplasm. Its function is as follows. NAD-binding protein involved in the addition of a carboxymethylaminomethyl (cmnm) group at the wobble position (U34) of certain tRNAs, forming tRNA-cmnm(5)s(2)U34. The protein is tRNA uridine 5-carboxymethylaminomethyl modification enzyme MnmG of Buchnera aphidicola subsp. Schizaphis graminum (strain Sg).